A 199-amino-acid chain; its full sequence is ATP-dependent Clp protease proteolytic subunit (199 aa).

Ser-102 (nucleophile) is an active-site residue. His-127 is a catalytic residue.

This sequence belongs to the peptidase S14 family. Component of the chloroplastic Clp protease core complex.

The protein localises to the plastid. It is found in the chloroplast stroma. It catalyses the reaction Hydrolysis of proteins to small peptides in the presence of ATP and magnesium. alpha-casein is the usual test substrate. In the absence of ATP, only oligopeptides shorter than five residues are hydrolyzed (such as succinyl-Leu-Tyr-|-NHMec, and Leu-Tyr-Leu-|-Tyr-Trp, in which cleavage of the -Tyr-|-Leu- and -Tyr-|-Trp bonds also occurs).. Cleaves peptides in various proteins in a process that requires ATP hydrolysis. Has a chymotrypsin-like activity. Plays a major role in the degradation of misfolded proteins. In Physcomitrium patens (Spreading-leaved earth moss), this protein is ATP-dependent Clp protease proteolytic subunit.